A 354-amino-acid polypeptide reads, in one-letter code: Squamosa promoter-binding-like protein 15 (354 aa).

Residues 1–25 are disordered; sequence MELLMCSGQAESGGSSSTESSSLSG. The segment covering 7–25 has biased composition (low complexity); it reads SGQAESGGSSSTESSSLSG. The segment at 56–133 adopts an SBP-type zinc-finger fold; that stretch reads TARCQVEGCR…ACHNERRRKP (78 aa). 8 residues coordinate Zn(2+): C59, C64, C81, H84, C100, C103, H107, and C119. The Bipartite nuclear localization signal signature appears at 116–132; sequence KRSCRRRLACHNERRRK.

Zn(2+) is required as a cofactor.

It is found in the nucleus. In terms of biological role, trans-acting factor that binds specifically to the consensus nucleotide sequence 5'-TNCGTACAA-3'. The sequence is that of Squamosa promoter-binding-like protein 15 (SPL15) from Arabidopsis thaliana (Mouse-ear cress).